Here is a 114-residue protein sequence, read N- to C-terminus: MLEVIKAIEAEQVRSDLPEFNVGDTVKVHQKIKEGTRERVQVFEGTVLKRQNGGARETFTVRRVAYNVAVEKTFPVNSPLIEKIQVVRKGKVRRAKLYYLRDRVGKAAKVKERI.

The protein belongs to the bacterial ribosomal protein bL19 family.

This protein is located at the 30S-50S ribosomal subunit interface and may play a role in the structure and function of the aminoacyl-tRNA binding site. The chain is Large ribosomal subunit protein bL19 from Clostridium botulinum (strain ATCC 19397 / Type A).